Consider the following 778-residue polypeptide: Probable dipeptidyl peptidase 4 (778 aa).

Residues 1–18 (MKTSQFLSLLLLAGIAQA) form the signal peptide. N-linked (GlcNAc...) asparagine glycosylation is found at Asn84, Asn114, and Asn222. Residues Ser616, Asp693, and His728 each act as charge relay system in the active site.

Belongs to the peptidase S9B family.

The protein localises to the secreted. It catalyses the reaction Release of an N-terminal dipeptide, Xaa-Yaa-|-Zaa-, from a polypeptide, preferentially when Yaa is Pro, provided Zaa is neither Pro nor hydroxyproline.. In terms of biological role, extracellular dipeptidyl-peptidase which removes N-terminal dipeptides sequentially from polypeptides having unsubstituted N-termini provided that the penultimate residue is proline. Contributes to pathogenicity. The polypeptide is Probable dipeptidyl peptidase 4 (DPP4) (Arthroderma benhamiae (strain ATCC MYA-4681 / CBS 112371) (Trichophyton mentagrophytes)).